Reading from the N-terminus, the 229-residue chain is uncharacterized protein (229 aa).

It to M.pneumoniae MPN_376 central region.

This is an uncharacterized protein from Mycoplasma pneumoniae (strain ATCC 29342 / M129 / Subtype 1) (Mycoplasmoides pneumoniae).